The primary structure comprises 490 residues: Cytochrome P450 2C1 (490 aa).

Heme is bound at residue cysteine 435.

Belongs to the cytochrome P450 family. Requires heme as cofactor.

The protein resides in the endoplasmic reticulum membrane. Its subcellular location is the microsome membrane. The catalysed reaction is an organic molecule + reduced [NADPH--hemoprotein reductase] + O2 = an alcohol + oxidized [NADPH--hemoprotein reductase] + H2O + H(+). Functionally, cytochromes P450 are a group of heme-thiolate monooxygenases. In liver microsomes, this enzyme is involved in an NADPH-dependent electron transport pathway. It oxidizes a variety of structurally unrelated compounds, including steroids, fatty acids, and xenobiotics. This Oryctolagus cuniculus (Rabbit) protein is Cytochrome P450 2C1 (CYP2C1).